The primary structure comprises 373 residues: Dual-specificity RNA methyltransferase RlmN (373 aa).

Catalysis depends on E104, which acts as the Proton acceptor. The region spanning 110–349 (KNQRTTLCIS…VTIRKIRGYD (240 aa)) is the Radical SAM core domain. C117 and C354 are oxidised to a cystine. Residues C124, C128, and C131 each coordinate [4Fe-4S] cluster. S-adenosyl-L-methionine contacts are provided by residues 178–179 (GE), S210, 232–234 (SLH), and N311. The active-site S-methylcysteine intermediate is the C354.

It belongs to the radical SAM superfamily. RlmN family. Requires [4Fe-4S] cluster as cofactor.

The protein localises to the cytoplasm. The enzyme catalyses adenosine(2503) in 23S rRNA + 2 reduced [2Fe-2S]-[ferredoxin] + 2 S-adenosyl-L-methionine = 2-methyladenosine(2503) in 23S rRNA + 5'-deoxyadenosine + L-methionine + 2 oxidized [2Fe-2S]-[ferredoxin] + S-adenosyl-L-homocysteine. It catalyses the reaction adenosine(37) in tRNA + 2 reduced [2Fe-2S]-[ferredoxin] + 2 S-adenosyl-L-methionine = 2-methyladenosine(37) in tRNA + 5'-deoxyadenosine + L-methionine + 2 oxidized [2Fe-2S]-[ferredoxin] + S-adenosyl-L-homocysteine. Its function is as follows. Specifically methylates position 2 of adenine 2503 in 23S rRNA and position 2 of adenine 37 in tRNAs. m2A2503 modification seems to play a crucial role in the proofreading step occurring at the peptidyl transferase center and thus would serve to optimize ribosomal fidelity. This is Dual-specificity RNA methyltransferase RlmN from Buchnera aphidicola subsp. Baizongia pistaciae (strain Bp).